A 394-amino-acid polypeptide reads, in one-letter code: NAD(P)H-quinone oxidoreductase subunit H (394 aa).

This sequence belongs to the complex I 49 kDa subunit family. NDH-1 can be composed of about 15 different subunits; different subcomplexes with different compositions have been identified which probably have different functions.

Its subcellular location is the cellular thylakoid membrane. The enzyme catalyses a plastoquinone + NADH + (n+1) H(+)(in) = a plastoquinol + NAD(+) + n H(+)(out). It catalyses the reaction a plastoquinone + NADPH + (n+1) H(+)(in) = a plastoquinol + NADP(+) + n H(+)(out). Its function is as follows. NDH-1 shuttles electrons from an unknown electron donor, via FMN and iron-sulfur (Fe-S) centers, to quinones in the respiratory and/or the photosynthetic chain. The immediate electron acceptor for the enzyme in this species is believed to be plastoquinone. Couples the redox reaction to proton translocation, and thus conserves the redox energy in a proton gradient. Cyanobacterial NDH-1 also plays a role in inorganic carbon-concentration. The sequence is that of NAD(P)H-quinone oxidoreductase subunit H from Synechococcus sp. (strain ATCC 27144 / PCC 6301 / SAUG 1402/1) (Anacystis nidulans).